Here is a 178-residue protein sequence, read N- to C-terminus: Orotate phosphoribosyltransferase (178 aa).

5-phospho-alpha-D-ribose 1-diphosphate is bound by residues Arg92, Lys93, Lys96, and 118-126; that span reads EDVTTTGGS. Positions 122 and 150 each coordinate orotate.

Belongs to the purine/pyrimidine phosphoribosyltransferase family. PyrE subfamily. In terms of assembly, homodimer. The cofactor is Mg(2+).

The catalysed reaction is orotidine 5'-phosphate + diphosphate = orotate + 5-phospho-alpha-D-ribose 1-diphosphate. It functions in the pathway pyrimidine metabolism; UMP biosynthesis via de novo pathway; UMP from orotate: step 1/2. Functionally, catalyzes the transfer of a ribosyl phosphate group from 5-phosphoribose 1-diphosphate to orotate, leading to the formation of orotidine monophosphate (OMP). This chain is Orotate phosphoribosyltransferase, found in Methanosphaera stadtmanae (strain ATCC 43021 / DSM 3091 / JCM 11832 / MCB-3).